Reading from the N-terminus, the 528-residue chain is DKGPAMKYRTDNTPEPISSHVSHYGSDSSQATQSPAIKGSAVNFNSHSMTPFGGPSGMTPFGGASSSFSAVPSPYPSTLTGGGTVFVALYDYEARTTDDLSFKGGERFQIINNTEGDWWEARSIATGKTGYIPSNYVAPADSIEAEEWYFGKMGRKDAERLLLNPGNQRGIFLVRESETTKGAYSLSIRDWDEVRGDNVKHYKIRKLDNGGYYITTRAQFESLQKLVKHSREHADGLCHKLTTVCPTVKPQTQGLAKDAWEIPRESLRLEVKLGQGCFGEVWMGTWNGTTKVAIKTLKLGTMMPEAFLQEAQIMKKLRHDKLVPLYAVVSEEPIYIVTEFMTKGSLLDFLKEGEGKFLKLPQLVDMAAQIADGMAYIERMNYIHRDLRAANILVGDNLVCKIADFGLARLIEDNEYTARQGAKFPIKWTAPEAALYGRFTIKSDVWSFGILLTELVTKGRVPYPGMVNREVLEQVERGYRMPCPQGCPESLHELMKLCWKKDPDERPTFEYIQSFLEDYFTAAEPSGY.

Residues 1-12 are compositionally biased toward basic and acidic residues; sequence DKGPAMKYRTDN. The tract at residues 1 to 35 is disordered; the sequence is DKGPAMKYRTDNTPEPISSHVSHYGSDSSQATQSP. Residues 18-29 are compositionally biased toward low complexity; that stretch reads SSHVSHYGSDSS. An SH3 domain is found at 81–142; sequence GGGTVFVALY…PSNYVAPADS (62 aa). In terms of domain architecture, SH2 spans 148 to 245; that stretch reads WYFGKMGRKD…GLCHKLTTVC (98 aa). Residues 267 to 520 form the Protein kinase domain; the sequence is LRLEVKLGQG…YIQSFLEDYF (254 aa). Residues 273–281 and Lys295 contribute to the ATP site; that span reads LGQGCFGEV. Asp386 acts as the Proton acceptor in catalysis. Position 416 is a phosphotyrosine; by autocatalysis (Tyr416).

The protein belongs to the protein kinase superfamily. Tyr protein kinase family. SRC subfamily.

The catalysed reaction is L-tyrosyl-[protein] + ATP = O-phospho-L-tyrosyl-[protein] + ADP + H(+). The sequence is that of Tyrosine-protein kinase transforming protein Yes (V-YES) from Galliformes (Y73SV).